The following is a 356-amino-acid chain: Vanillin synthase, chloroplastic (356 aa).

A glycan (N-linked (GlcNAc...) asparagine) is linked at asparagine 122. 2 disulfide bridges follow: cysteine 159–cysteine 202 and cysteine 193–cysteine 235. Residue cysteine 162 is part of the active site. N-linked (GlcNAc...) asparagine glycosylation occurs at asparagine 251. Residues cysteine 293 and cysteine 343 are joined by a disulfide bond. Active-site residues include histidine 302 and asparagine 322.

This sequence belongs to the peptidase C1 family. Forms homodimers, homotrimers and homotetramers. As to expression, accumulates in the inner part of vanilla pods (at protein level). Expressed in single cells located a few cell layers from the inner epidermis.

The protein resides in the plastid. Its subcellular location is the chloroplast. It catalyses the reaction (E)-ferulate + H2O = vanillin + acetate. The enzyme catalyses 4-O-beta-D-glucosyl-trans-ferulate + H2O = 4-O-beta-D-glucosyl-vanillin + acetate. It functions in the pathway aromatic compound metabolism; phenylpropanoid biosynthesis. Functionally, involved in the biosynthesis of vanillin (4-hydroxy-3-methoxy-benzaldehyde) and derivative natural products, key components of vanilla pods flavor. Catalyzes the double carbon bond cleavage of ferulic acid to vanillin and of their respective glucosides via a coupled non-oxidative hydratase/lyase reaction. Inactive toward p-coumaric acid, caffeic acid and their glucosides derivatives. The polypeptide is Vanillin synthase, chloroplastic (Vanilla planifolia (Vanilla)).